Reading from the N-terminus, the 129-residue chain is Transmembrane protein 105 (129 aa).

Helical transmembrane passes span 23 to 43 (AGNV…TAWL) and 94 to 114 (FLAG…CGVV).

The protein localises to the membrane. In Homo sapiens (Human), this protein is Transmembrane protein 105 (TMEM105).